Reading from the N-terminus, the 157-residue chain is E3 ubiquitin-protein ligase RHA1B (157 aa).

The segment at 85–129 (CTVCLSDFVSDDKIRQLPKCGHVFHHRCLDRWIVDCNKITCPICR) adopts an RING-type; atypical zinc-finger fold.

The catalysed reaction is S-ubiquitinyl-[E2 ubiquitin-conjugating enzyme]-L-cysteine + [acceptor protein]-L-lysine = [E2 ubiquitin-conjugating enzyme]-L-cysteine + N(6)-ubiquitinyl-[acceptor protein]-L-lysine.. Its pathway is protein modification; protein ubiquitination. Functionally, possesses E3 ubiquitin-protein ligase activity when associated with the E2 enzyme UBC8 in vitro. The sequence is that of E3 ubiquitin-protein ligase RHA1B from Arabidopsis thaliana (Mouse-ear cress).